The primary structure comprises 537 residues: Eukaryotic translation initiation factor 3 subunit L (537 aa).

Positions 300–512 (TFSSILLYIQ…IHIADTKVSH (213 aa)) constitute a PCI domain.

It belongs to the eIF-3 subunit L family. As to quaternary structure, component of the eukaryotic translation initiation factor 3 (eIF-3) complex.

The protein resides in the cytoplasm. Its function is as follows. Component of the eukaryotic translation initiation factor 3 (eIF-3) complex, which is involved in protein synthesis of a specialized repertoire of mRNAs and, together with other initiation factors, stimulates binding of mRNA and methionyl-tRNAi to the 40S ribosome. The eIF-3 complex specifically targets and initiates translation of a subset of mRNAs involved in cell proliferation. This Culex quinquefasciatus (Southern house mosquito) protein is Eukaryotic translation initiation factor 3 subunit L.